A 258-amino-acid chain; its full sequence is MAKYQGEVQSLKLDDDSVIEGVSDQVLVAVVVSFALIATLVYALFRNVHQNIHPENQELVRVLREQLQTEQDAPAATRQQFYTDMYCPICLHQASFPVETNCGHLFCGACIIAYWRYGSWLGAISCPICRQTVTLLLTVFGEDDQSQDVLRLHQDINDYNRRFSGQPRSIMERIMDLPTLLRHAFREMFSVGGLFWMFRIRIILCLMGAFFYLISPLDFVPEALFGILGFLDDFFVIFLLLIYISIMYREVITQRLTR.

Topologically, residues 1-24 (MAKYQGEVQSLKLDDDSVIEGVSD) are lumenal. A helical transmembrane segment spans residues 25 to 45 (QVLVAVVVSFALIATLVYALF). At 46 to 201 (RNVHQNIHPE…GGLFWMFRIR (156 aa)) the chain is on the cytoplasmic side. The RING-type zinc finger occupies 87 to 130 (CPICLHQASFPVETNCGHLFCGACIIAYWRYGSWLGAISCPICR). Residues 202-222 (IILCLMGAFFYLISPLDFVPE) traverse the membrane as a helical segment. Position 223 (Ala-223) is a topological domain, lumenal. Residues 224-244 (LFGILGFLDDFFVIFLLLIYI) traverse the membrane as a helical segment. Residues 245-258 (SIMYREVITQRLTR) are Cytoplasmic-facing.

As to quaternary structure, (Microbial infection) Interacts with human cytomegalovirus protein NEC2/UL50; this interaction promotes of UBA7 ubiquitination and subsequent proteasomal degradation. In terms of assembly, constitutively associated with the ERLIN1/ERLIN 2 complex. Interacts with activated ITPR1. Expressed in the spinal cord.

It is found in the endoplasmic reticulum membrane. The enzyme catalyses S-ubiquitinyl-[E2 ubiquitin-conjugating enzyme]-L-cysteine + [acceptor protein]-L-lysine = [E2 ubiquitin-conjugating enzyme]-L-cysteine + N(6)-ubiquitinyl-[acceptor protein]-L-lysine.. The protein operates within protein modification; protein ubiquitination. Its function is as follows. E3 ubiquitin-protein ligase that plays an essential role in stimulus-induced inositol 1,4,5-trisphosphate receptor type 1 (ITPR1) ubiquitination and degradation via the endoplasmic reticulum-associated degradation (ERAD) pathway. Also involved in ITPR1 turnover in resting cells. Selectively inhibits the TLR3-triggered innate immune response by promoting the 'Lys-48'-linked polyubiquitination and degradation of TLR3. This is E3 ubiquitin-protein ligase RNF170 (RNF170) from Homo sapiens (Human).